The following is a 194-amino-acid chain: Molybdenum cofactor guanylyltransferase (194 aa).

Residues 12–14 (LAG), K25, D71, and D101 contribute to the GTP site. Residue D101 participates in Mg(2+) binding.

Belongs to the MobA family. Monomer. Mg(2+) serves as cofactor.

The protein resides in the cytoplasm. It catalyses the reaction Mo-molybdopterin + GTP + H(+) = Mo-molybdopterin guanine dinucleotide + diphosphate. Transfers a GMP moiety from GTP to Mo-molybdopterin (Mo-MPT) cofactor (Moco or molybdenum cofactor) to form Mo-molybdopterin guanine dinucleotide (Mo-MGD) cofactor. The chain is Molybdenum cofactor guanylyltransferase from Salmonella typhimurium (strain LT2 / SGSC1412 / ATCC 700720).